Here is a 396-residue protein sequence, read N- to C-terminus: Elongation factor Tu (396 aa).

A tr-type G domain is found at Lys-10 to Glu-206. The G1 stretch occupies residues Gly-19–Thr-26. Gly-19 to Thr-26 provides a ligand contact to GTP. Thr-26 provides a ligand contact to Mg(2+). The G2 stretch occupies residues Gly-60–Asn-64. The G3 stretch occupies residues Asp-81 to Gly-84. Residues Asp-81–His-85 and Asn-136–Asp-139 each bind GTP. Positions Asn-136 to Asp-139 are G4. Residues Ser-174–Lys-176 form a G5 region.

It belongs to the TRAFAC class translation factor GTPase superfamily. Classic translation factor GTPase family. EF-Tu/EF-1A subfamily. Monomer.

The protein localises to the cytoplasm. It catalyses the reaction GTP + H2O = GDP + phosphate + H(+). Its function is as follows. GTP hydrolase that promotes the GTP-dependent binding of aminoacyl-tRNA to the A-site of ribosomes during protein biosynthesis. The protein is Elongation factor Tu of Methylibium petroleiphilum (strain ATCC BAA-1232 / LMG 22953 / PM1).